Consider the following 366-residue polypeptide: Variable large protein 10 (366 aa).

The first 18 residues, M1–S18, serve as a signal peptide directing secretion. C19 is lipidated: N-palmitoyl cysteine. A lipid anchor (S-diacylglycerol cysteine) is attached at C19.

Belongs to the variable large protein (Vlp) family. Beta subfamily.

The protein localises to the cell outer membrane. Its function is as follows. The Vlp and Vsp proteins are antigenically distinct proteins, only one vlp or vsp gene is transcriptionally active at any one time. Switching between these genes is a mechanism of host immune response evasion. This chain is Variable large protein 10, found in Borrelia hermsii.